The sequence spans 577 residues: Probable L-gulonolactone oxidase 4 (577 aa).

A signal peptide spans 1-17; the sequence is MSFWLSLIFCFFTFASS. One can recognise an FAD-binding PCMH-type domain in the interval 46-228; the sequence is SICKAAKVEY…SQVTFELQPM (183 aa).

This sequence belongs to the oxygen-dependent FAD-linked oxidoreductase family. FAD is required as a cofactor.

The enzyme catalyses L-gulono-1,4-lactone + O2 = L-ascorbate + H2O2 + H(+). Its pathway is cofactor biosynthesis; L-ascorbate biosynthesis. May be involved in the biosynthesis of ascorbic acid. The protein is Probable L-gulonolactone oxidase 4 of Arabidopsis thaliana (Mouse-ear cress).